We begin with the raw amino-acid sequence, 294 residues long: Elongation factor Ts (294 aa).

The involved in Mg(2+) ion dislocation from EF-Tu stretch occupies residues 81 to 84 (TDFV).

This sequence belongs to the EF-Ts family.

It localises to the cytoplasm. In terms of biological role, associates with the EF-Tu.GDP complex and induces the exchange of GDP to GTP. It remains bound to the aminoacyl-tRNA.EF-Tu.GTP complex up to the GTP hydrolysis stage on the ribosome. The sequence is that of Elongation factor Ts from Lawsonia intracellularis (strain PHE/MN1-00).